Here is a 375-residue protein sequence, read N- to C-terminus: Adiponectin receptor protein 1 (375 aa).

The disordered stretch occupies residues 1–60 (MSSHKGSAGAQGNGAPSGNREADTVELAELGPLLEEKGKRAASSPAKAEEDQACPVPQEE). At 1 to 136 (MSSHKGSAGA…SIFRIHTETG (136 aa)) the chain is on the cytoplasmic side. A helical membrane pass occupies residues 137 to 157 (NIWTHLLGFVLFLFLGILTML). Over 158–170 (RPNMYFMAPLQEK) the chain is Extracellular. The chain crosses the membrane as a helical span at residues 171-191 (VVFGMFFLGAVLCLSFSWLFH). Histidine 191 is a binding site for Zn(2+). Residues 192 to 203 (TVYCHSEKVSRT) are Cytoplasmic-facing. A helical membrane pass occupies residues 204 to 224 (FSKLDYSGIALLIMGSFVPWL). Residues 225–234 (YYSFYCSPQP) lie on the Extracellular side of the membrane. Residues 235–255 (RLIYLSIVCVLGISAIIVAQW) form a helical membrane-spanning segment. At 256 to 264 (DRFATPKHR) the chain is on the cytoplasmic side. A helical membrane pass occupies residues 265-285 (QTRAGVFLGLGLSGVVPTMHF). Topologically, residues 286-298 (TIAEGFVKATTVG) are extracellular. A helical membrane pass occupies residues 299-319 (QMGWFFLMAVMYITGAGLYAA). Residues 320-337 (RIPERFFPGKFDIWFQSH) lie on the Cytoplasmic side of the membrane. Residues histidine 337 and histidine 341 each coordinate Zn(2+). Residues 338–358 (QIFHVLVVAAAFVHFYGVSNL) form a helical membrane-spanning segment. The Extracellular segment spans residues 359–375 (QEFRYGLEGGCTDDSLL).

Belongs to the ADIPOR family. May form homooligomers and heterooligomers with ADIPOR2. Interacts with APPL2 (via BAR domain); hinders the accessibility of APPL1 to ADIPOR1; negatively regulates adiponectin signaling; ADIPOQ dissociates this interaction and facilitates the recruitment of APPL1 to ADIPOR1. Interacts with APPL1; ADIPOQ enhances this interaction; inhibites adiponectin-stimulated binding of APPL2 to ADIPOR1. As to expression, detected in brain and quadriceps muscle (at protein level). Widely expressed. Expressed in heart, kidney, liver, lung, skeletal muscle, white adipose tissue, brown adipose tissue, aorta and spleen. Weakly expressed in brain and testis.

It is found in the cell membrane. In terms of biological role, receptor for ADIPOQ, an essential hormone secreted by adipocytes that regulates glucose and lipid metabolism. Required for normal glucose and fat homeostasis and for maintaining a normal body weight. ADIPOQ-binding activates a signaling cascade that leads to increased AMPK activity, and ultimately to increased fatty acid oxidation, increased glucose uptake and decreased gluconeogenesis. Has high affinity for globular adiponectin and low affinity for full-length adiponectin. In Mus musculus (Mouse), this protein is Adiponectin receptor protein 1.